A 66-amino-acid polypeptide reads, in one-letter code: Large ribosomal subunit protein bL35 (66 aa).

Belongs to the bacterial ribosomal protein bL35 family.

This Methylobacterium nodulans (strain LMG 21967 / CNCM I-2342 / ORS 2060) protein is Large ribosomal subunit protein bL35.